Reading from the N-terminus, the 222-residue chain is 7-cyano-7-deazaguanine synthase (222 aa).

14 to 24 (FSGGQDSTTCL) contributes to the ATP binding site. The Zn(2+) site is built by Cys192, Cys201, Cys204, and Cys207.

The protein belongs to the QueC family. Homodimer. The cofactor is Zn(2+).

It catalyses the reaction 7-carboxy-7-deazaguanine + NH4(+) + ATP = 7-cyano-7-deazaguanine + ADP + phosphate + H2O + H(+). The protein operates within purine metabolism; 7-cyano-7-deazaguanine biosynthesis. In terms of biological role, catalyzes the ATP-dependent conversion of 7-carboxy-7-deazaguanine (CDG) to 7-cyano-7-deazaguanine (preQ(0)). The chain is 7-cyano-7-deazaguanine synthase from Clostridium acetobutylicum (strain ATCC 824 / DSM 792 / JCM 1419 / IAM 19013 / LMG 5710 / NBRC 13948 / NRRL B-527 / VKM B-1787 / 2291 / W).